The primary structure comprises 1879 residues: Protein TIC 214 (1879 aa).

The next 6 membrane-spanning stretches (helical) occupy residues Ile18–Gly38, Phe67–Leu87, Pro90–His110, Leu127–Leu147, Val175–Ile195, and Ile218–Ile238. The disordered stretch occupies residues Leu243 to Pro291. Positions Asp257–Gln271 are enriched in basic and acidic residues.

It belongs to the TIC214 family. As to quaternary structure, part of the Tic complex.

The protein localises to the plastid. The protein resides in the chloroplast inner membrane. In terms of biological role, involved in protein precursor import into chloroplasts. May be part of an intermediate translocation complex acting as a protein-conducting channel at the inner envelope. In Morus indica (Mulberry), this protein is Protein TIC 214.